The chain runs to 80 residues: OMEGA-myrmeciitoxin(02)-Mg1a (80 aa).

The N-terminal stretch at 1 to 30 is a signal peptide; that stretch reads MKNNYISTCIVYLMAALLLISVISIKECTA. The region spanning 35–75 is the EGF-like domain; sequence YGDPCSDDLKDYCIHGDCFFLKELNQPACRCYTGYYGSRCE. 3 cysteine pairs are disulfide-bonded: cysteine 39–cysteine 52, cysteine 47–cysteine 63, and cysteine 65–cysteine 74.

Belongs to the EGF domain peptide family. As to expression, expressed by the venom gland.

The protein resides in the secreted. Functionally, ant peptide with probable defensive activity which acts as a potent agonist of the mammalian epidermal growth factor receptor (EGFR) (EC(50)=6.3 nM). Mimics, both structurally and functionally, vertebrate epidermal growth factor (EGF) peptide hormones. In vivo, intraplantar injection in mice causes long-lasting (several days) hypersensitivity of the injected paw to both mechanical and thermal stimuli. Its long-lasting effect is unusual for venom toxins whose effects are usually immediate. One possible explanation is that it would reduce the duration of a nest attack, discourage future attacks, or enhance the actions of subsequent exposure to other pain-inducing venom peptides. This Myrmecia gulosa (Red bulldog ant) protein is OMEGA-myrmeciitoxin(02)-Mg1a.